The sequence spans 363 residues: Fructose-1,6-bisphosphate aldolase/phosphatase (363 aa).

Catalysis depends on Asp-11, which acts as the Proton acceptor; for FBP phosphatase activity. Positions 11, 18, 51, and 52 each coordinate Mg(2+). Beta-D-fructose 1,6-bisphosphate is bound at residue His-18. His-18 lines the dihydroxyacetone phosphate pocket. Tyr-89 serves as a coordination point for beta-D-fructose 1,6-bisphosphate. Gln-93 provides a ligand contact to Mg(2+). 102–103 (GN) contacts beta-D-fructose 1,6-bisphosphate. Asp-130 is a binding site for Mg(2+). Position 131 (Lys-131) interacts with beta-D-fructose 1,6-bisphosphate. Residue Lys-131 participates in dihydroxyacetone phosphate binding. Tyr-230 acts as the Proton donor/acceptor; for FBP aldolase activity in catalysis. Positions 233, 234, and 235 each coordinate Mg(2+). Lys-233 functions as the Schiff-base intermediate with DHAP; for FBP aldolase activity in the catalytic mechanism. Residues 243 to 244 (QK), Arg-267, and Tyr-348 contribute to the beta-D-fructose 1,6-bisphosphate site. Arg-267 lines the dihydroxyacetone phosphate pocket.

This sequence belongs to the FBP aldolase/phosphatase family. As to quaternary structure, homooctamer; dimer of tetramers. Mg(2+) serves as cofactor.

It carries out the reaction beta-D-fructose 1,6-bisphosphate + H2O = beta-D-fructose 6-phosphate + phosphate. It catalyses the reaction beta-D-fructose 1,6-bisphosphate = D-glyceraldehyde 3-phosphate + dihydroxyacetone phosphate. The protein operates within carbohydrate biosynthesis; gluconeogenesis. Catalyzes two subsequent steps in gluconeogenesis: the aldol condensation of dihydroxyacetone phosphate (DHAP) and glyceraldehyde-3-phosphate (GA3P) to fructose-1,6-bisphosphate (FBP), and the dephosphorylation of FBP to fructose-6-phosphate (F6P). This chain is Fructose-1,6-bisphosphate aldolase/phosphatase, found in Thermus thermophilus (strain ATCC BAA-163 / DSM 7039 / HB27).